We begin with the raw amino-acid sequence, 349 residues long: 3-dehydroquinate synthase (349 aa).

NAD(+) contacts are provided by residues 63–68 (DGEEYK), 97–101 (GVIGD), 121–122 (TT), Lys134, Lys143, and 161–164 (FLTT). Zn(2+) is bound by residues Glu176, His235, and His252.

It belongs to the sugar phosphate cyclases superfamily. Dehydroquinate synthase family. Co(2+) serves as cofactor. The cofactor is Zn(2+). It depends on NAD(+) as a cofactor.

It is found in the cytoplasm. It catalyses the reaction 7-phospho-2-dehydro-3-deoxy-D-arabino-heptonate = 3-dehydroquinate + phosphate. It participates in metabolic intermediate biosynthesis; chorismate biosynthesis; chorismate from D-erythrose 4-phosphate and phosphoenolpyruvate: step 2/7. In terms of biological role, catalyzes the conversion of 3-deoxy-D-arabino-heptulosonate 7-phosphate (DAHP) to dehydroquinate (DHQ). This Sulfurimonas denitrificans (strain ATCC 33889 / DSM 1251) (Thiomicrospira denitrificans (strain ATCC 33889 / DSM 1251)) protein is 3-dehydroquinate synthase.